The following is a 991-amino-acid chain: MDFNDKLATLTRVCLARRVSAGRFVKLTRHLMENEGASEVNPKALFGANTFDLLFFAYVHKLAFEDSLLPPYKLLAYLKVCAYGRLPQLLMYLGKQLQEMDTDVDLGANAGYSYLIQVLVSFMKDAFASGGGMRKRYGTSIAKGFGFFAEVLLTRLGDRMAGVTAPEITSQLAELAKVDATIAGRLGEAWMGLKGAAKTSTTAETVAATVATPTTLTRLYRDTLFESLMFGDSSWNQYGSLFQLISTVYAMPGYPTLASQPVQSRLAIIGEVICAMFDCQSITFLRRDSAKRNNYWKSCIRTRIPRIIRTLFPHSTPEEKTLIQSVVSKSVLGLDQPTVTLIRLSIGSDELDDMFSSFPGGLDVDIRHELVAACISEGVLPKDAFNAIFKDSGISVEALDYADELTIDGQAMSLDTMAEQLSYENLEIGSVSDCLMSKVVAQMEKLSGNAQEALTKRLLVCLADFVQAGNVRPVRYMCQALALNTTAVDIMALCVDPMLLLKALVDCIELWREEEDEANYQEAYTDFGAIVVFAITLKQRYHLDLALLNQFGTLFVGAPSPSSTMPSHELFLSQLLTESDSSQRIFHLSDEQNDQLSGWATALYDAGGISDDLMRSSSVKQFFLVTPAIFQQSMLAHEKGLLSLSTFKGGLEYFLQPFLLGSTVGVFKWLSEQLWVHSQKGHDEQMSTVISVCSTLILTDNTDIEVLSPIHQMVLAICADEMYEALDMALRAGYMVENRVFEFLEPFVSAINYNLNVQRTVSSSGFRSQKGIGMSGGGGSGTKEQTWKYGASMIATIKEQVSSLISWSQNQYTGPPFGYELVMILSSVDTLGHKYVLEQLIEEIALADSNGTGHYTVEVVATIATVAFIISTSVKSPRPFSDSQLILKSLDNMVNDSTGKSKDICVLLQSKILQLLTTAGYKPDGSRLDGKPHAKEDYSFVVNRTGEVENKPINDSSQNSNTDNQFMDTNMFGGDDFTMDFGGDIDMPDLF.

This sequence belongs to the Mediator complex subunit 5 family. As to quaternary structure, component of the Mediator complex.

The protein localises to the nucleus. Functionally, component of the Mediator complex, a coactivator involved in the regulated transcription of nearly all RNA polymerase II-dependent genes. Mediator functions as a bridge to convey information from gene-specific regulatory proteins to the basal RNA polymerase II transcription machinery. Mediator is recruited to promoters by direct interactions with regulatory proteins and serves as a scaffold for the assembly of a functional preinitiation complex with RNA polymerase II and the general transcription factors. This chain is Mediator of RNA polymerase II transcription subunit 5 (NUT1), found in Yarrowia lipolytica (strain CLIB 122 / E 150) (Yeast).